A 147-amino-acid polypeptide reads, in one-letter code: Transcription antitermination protein NusB (147 aa).

This sequence belongs to the NusB family.

In terms of biological role, involved in transcription antitermination. Required for transcription of ribosomal RNA (rRNA) genes. Binds specifically to the boxA antiterminator sequence of the ribosomal RNA (rrn) operons. In Teredinibacter turnerae (strain ATCC 39867 / T7901), this protein is Transcription antitermination protein NusB.